The chain runs to 2260 residues: Protein Ycf2 (2260 aa).

1614–1621 serves as a coordination point for ATP; the sequence is GSIGTGRS.

Belongs to the Ycf2 family.

It localises to the plastid. It is found in the chloroplast stroma. Functionally, probable ATPase of unknown function. Its presence in a non-photosynthetic plant (Epifagus virginiana) and experiments in tobacco indicate that it has an essential function which is probably not related to photosynthesis. The chain is Protein Ycf2 from Dioscorea elephantipes (Elephant's foot yam).